The primary structure comprises 146 residues: Putative pre-16S rRNA nuclease (146 aa).

This sequence belongs to the YqgF nuclease family.

It localises to the cytoplasm. Its function is as follows. Could be a nuclease involved in processing of the 5'-end of pre-16S rRNA. In Pseudomonas syringae pv. tomato (strain ATCC BAA-871 / DC3000), this protein is Putative pre-16S rRNA nuclease.